The chain runs to 491 residues: Probable cytosol aminopeptidase (491 aa).

2 residues coordinate Mn(2+): K264 and D269. K276 is a catalytic residue. Mn(2+) contacts are provided by D287, D346, and E348. R350 is a catalytic residue.

The protein belongs to the peptidase M17 family. Requires Mn(2+) as cofactor.

The protein localises to the cytoplasm. It catalyses the reaction Release of an N-terminal amino acid, Xaa-|-Yaa-, in which Xaa is preferably Leu, but may be other amino acids including Pro although not Arg or Lys, and Yaa may be Pro. Amino acid amides and methyl esters are also readily hydrolyzed, but rates on arylamides are exceedingly low.. It carries out the reaction Release of an N-terminal amino acid, preferentially leucine, but not glutamic or aspartic acids.. Its function is as follows. Presumably involved in the processing and regular turnover of intracellular proteins. Catalyzes the removal of unsubstituted N-terminal amino acids from various peptides. In Xylella fastidiosa (strain M12), this protein is Probable cytosol aminopeptidase.